The primary structure comprises 272 residues: Protein SSO0103 (272 aa).

The protein belongs to the CinA family.

In Saccharolobus solfataricus (strain ATCC 35092 / DSM 1617 / JCM 11322 / P2) (Sulfolobus solfataricus), this protein is Protein SSO0103.